A 323-amino-acid polypeptide reads, in one-letter code: Beta-ketoacyl-[acyl-carrier-protein] synthase III (323 aa).

Residues Cys114 and His250 contribute to the active site. The interval 251–255 is ACP-binding; sequence QANLR. Residue Asn280 is part of the active site.

Belongs to the thiolase-like superfamily. FabH family. Homodimer.

It localises to the cytoplasm. It catalyses the reaction malonyl-[ACP] + acetyl-CoA + H(+) = 3-oxobutanoyl-[ACP] + CO2 + CoA. It functions in the pathway lipid metabolism; fatty acid biosynthesis. Catalyzes the condensation reaction of fatty acid synthesis by the addition to an acyl acceptor of two carbons from malonyl-ACP. Catalyzes the first condensation reaction which initiates fatty acid synthesis and may therefore play a role in governing the total rate of fatty acid production. Possesses both acetoacetyl-ACP synthase and acetyl transacylase activities. Its substrate specificity determines the biosynthesis of branched-chain and/or straight-chain of fatty acids. The protein is Beta-ketoacyl-[acyl-carrier-protein] synthase III of Cereibacter sphaeroides (strain ATCC 17023 / DSM 158 / JCM 6121 / CCUG 31486 / LMG 2827 / NBRC 12203 / NCIMB 8253 / ATH 2.4.1.) (Rhodobacter sphaeroides).